The chain runs to 499 residues: MLERPPALAMPMPTEGTPPPLSGTPIPVPAYFRHAEPGFSLKRPRGLSRSLPPPPPAKGSIPISRLFPPRTPGWHQLQPRRVSFRGEASETLQSPGYDPSRPESFFQQSFQRLSRLGHGSYGEVFKVRSKEDGRLYAVKRSMSPFRGPKDRARKLAEVGSHEKVGQHPCCVRLEQAWEEGGILYLQTELCGPSLQQHCEAWGASLPEAQVWGYLRDTLLALAHLHSQGLVHLDVKPANIFLGPRGRCKLGDFGLLVELGTAGAGEVQEGDPRYMAPELLQGSYGTAADVFSLGLTILEVACNMELPHGGEGWQQLRQGYLPPEFTAGLSSELRSVLVMMLEPDPKLRATAEALLALPVLRQPRAWGVLWCMAAEALSRGWALWQALLALLCWLWHGLAHPASWLQPLGPPATPPGSPPCSLLLDSSLSSNWDDDSLGPSLSPEAVLARTVGSTSTPRSRCTPRDALDLSDINSEPPRGSFPSFEPRNLLSLFEDTLDPT.

An N-acetylmethionine modification is found at M1. Residues 1 to 29 are disordered; sequence MLERPPALAMPMPTEGTPPPLSGTPIPVP. Residues 16-28 show a composition bias toward pro residues; sequence GTPPPLSGTPIPV. T17 bears the Phosphothreonine mark. At S40 the chain carries Phosphoserine. A disordered region spans residues 42 to 72; it reads KRPRGLSRSLPPPPPAKGSIPISRLFPPRTP. A phosphoserine mark is found at S94 and S120. The region spanning 110–359 is the Protein kinase domain; sequence FQRLSRLGHG…AEALLALPVL (250 aa). ATP is bound by residues 116–124 and K139; that span reads LGHGSYGEV. Phosphoserine is present on residues S143 and S160. D233 (proton acceptor) is an active-site residue. Mg(2+)-binding residues include N238, D251, and G253. A Membrane-association motif motif is present at residues 382–398; it reads LWQALLALLCWLWHGLA. The segment at 398-499 is interaction with PIN1; the sequence is AHPASWLQPL…SLFEDTLDPT (102 aa). At S426 the chain carries Phosphoserine; by PLK1. Residues 437 to 499 form an interaction with CDC2-CCNB1 region; sequence GPSLSPEAVL…SLFEDTLDPT (63 aa). Residues 451–485 form a disordered region; the sequence is GSTSTPRSRCTPRDALDLSDINSEPPRGSFPSFEP. Phosphoserine occurs at positions 469, 473, and 482. T495 bears the Phosphothreonine; by PLK1 mark.

The protein belongs to the protein kinase superfamily. Ser/Thr protein kinase family. WEE1 subfamily. As to quaternary structure, interacts with CDC2-CCNB1 complex. Can also interact with PIN1 when phosphorylated by CDC2-CCNB1. Post-translationally, autophosphorylated. Phosphorylated by CDC2-CCNB1 complexes on undefined serine and threonine residues. The phosphorylation by CDC2-CCNB1 complexes may inhibit the catalytic activity.

Its subcellular location is the endoplasmic reticulum membrane. It localises to the golgi apparatus membrane. The catalysed reaction is L-seryl-[protein] + ATP = O-phospho-L-seryl-[protein] + ADP + H(+). It carries out the reaction L-threonyl-[protein] + ATP = O-phospho-L-threonyl-[protein] + ADP + H(+). Negatively regulated by hyperphosphorylation during mitosis. The hyperphosphorylated form does not associate with CCNB1-CDC2 complexes. The PLK1 protein kinase may be required for mitotic phosphorylation. In terms of biological role, acts as a negative regulator of entry into mitosis (G2 to M transition) by phosphorylation of the CDK1 kinase specifically when CDK1 is complexed to cyclins. Mediates phosphorylation of CDK1 predominantly on 'Thr-14'. Also involved in Golgi fragmentation. May be involved in phosphorylation of CDK1 on 'Tyr-15' to a lesser degree, however tyrosine kinase activity is unclear and may be indirect. The sequence is that of Membrane-associated tyrosine- and threonine-specific cdc2-inhibitory kinase (PKMYT1) from Homo sapiens (Human).